Consider the following 113-residue polypeptide: Nitrogenase vanadium-iron protein delta chain (113 aa).

In terms of assembly, hexamer of two alpha, two beta, and two delta chains. The cofactor is iron-sulfur cluster. It depends on vanadium cation as a cofactor.

It carries out the reaction N2 + 8 reduced [2Fe-2S]-[ferredoxin] + 16 ATP + 16 H2O = H2 + 8 oxidized [2Fe-2S]-[ferredoxin] + 2 NH4(+) + 16 ADP + 16 phosphate + 6 H(+). Functionally, the key enzymatic reactions in nitrogen fixation are catalyzed by the nitrogenase complex, which has 2 components: the iron protein (component 2) and a component 1 which is either a molybdenum-iron protein, a vanadium-iron, or an iron-iron protein. The chain is Nitrogenase vanadium-iron protein delta chain (vnfG) from Azotobacter salinestris.